Reading from the N-terminus, the 909-residue chain is Protein translocase subunit SecA (909 aa).

ATP-binding positions include Gln-87, 105 to 109, and Asp-507; that span reads GEGKT. Disordered regions lie at residues 567-586 and 859-909; these read RRID…PGSS and YSEA…GKLD. Residues 865 to 889 show a composition bias toward basic and acidic residues; that stretch reads EHQSVTEGHEAKQQPFVRKSDKIGR. Zn(2+) is bound by residues Cys-893, Cys-895, Cys-904, and His-905. Residues 899-909 are compositionally biased toward basic residues; the sequence is RKYKQCHGKLD.

The protein belongs to the SecA family. In terms of assembly, monomer and homodimer. Part of the essential Sec protein translocation apparatus which comprises SecA, SecYEG and auxiliary proteins SecDF-YajC and YidC. Zn(2+) serves as cofactor.

It is found in the cell inner membrane. Its subcellular location is the cytoplasm. It catalyses the reaction ATP + H2O + cellular proteinSide 1 = ADP + phosphate + cellular proteinSide 2.. Its function is as follows. Part of the Sec protein translocase complex. Interacts with the SecYEG preprotein conducting channel. Has a central role in coupling the hydrolysis of ATP to the transfer of proteins into and across the cell membrane, serving both as a receptor for the preprotein-SecB complex and as an ATP-driven molecular motor driving the stepwise translocation of polypeptide chains across the membrane. In Nitrosomonas eutropha (strain DSM 101675 / C91 / Nm57), this protein is Protein translocase subunit SecA.